The chain runs to 46 residues: Endochitinase 2 (46 aa).

The protein belongs to the glycosyl hydrolase 19 family. Chitinase class I subfamily.

It carries out the reaction Random endo-hydrolysis of N-acetyl-beta-D-glucosaminide (1-&gt;4)-beta-linkages in chitin and chitodextrins.. Its function is as follows. Defense against chitin-containing fungal and bacterial pathogens. The sequence is that of Endochitinase 2 from Arachis hypogaea (Peanut).